Reading from the N-terminus, the 409-residue chain is O-methyltransferase pyiA (409 aa).

A compositionally biased stretch (polar residues) spans 1-21; it reads MASQDGTTELLSQSVNSTCIP. Positions 1-46 are disordered; the sequence is MASQDGTTELLSQSVNSTCIPGSTYHVDRGRASSASTPPTSPPLSE. Position 271 (D271) interacts with S-adenosyl-L-methionine. H317 acts as the Proton acceptor in catalysis.

The protein belongs to the class I-like SAM-binding methyltransferase superfamily. Cation-independent O-methyltransferase family.

The protein operates within mycotoxin biosynthesis. Its function is as follows. O-methyltransferase; part of the gene cluster that mediates the biosynthesis of the mycotoxin pyrichalasin H, a tyrosine-derived cytochalasan that inhibits the growth of rice seedlings, but also inhibits lymphocyte capping and actin polymerization and alters cell morphology. Pyrichalasin H is indicated as the responsible agent for the genus-specific pathogenicity of M.grisea toward crabgrass. The first step in the pathway is catalyzed by the O-methyltransferase pyiA which methylates free tyrosine to generate the precursor O-methyltyrosine. The hybrid PKS-NRPS pyiS, assisted by the enoyl reductase pyiC, are responsible for fusion of the O-methyltyrosine precursor and the polyketide backbone. The polyketide synthase module (PKS) of pyiS is responsible for the synthesis of the polyketide backbone and the downstream nonribosomal peptide synthetase (NRPS) amidates the carboxyl end of the polyketide with the O-methyltyrosine precursor. As the NRPS A-domain demonstrates substrate tolerance, pyiS can also use phenylalanine, tyrosine and even para-chlorophenylalanine as amino acid precursor, which leads to the production of novel cytochalasans, including halogenated cytochalasans. Because pyiS lacks a designated enoylreductase (ER) domain, the required activity is provided the enoyl reductase pyiC. Reduction by the hydrolyase pyiE leads to 1,5-dihydropyrrolone, which is substrate for dehydration and intra-molecular Diels-Alder cyclization by the Diels-Alderase pyiF to yield the required isoindolone-fused macrocycle. The tailoring cytochrome P450 monooxygenases piyD and piyG catalyze the hydroxylation at C-18 and C-7, respectivily, whereas the short-chain dehydrogenase/reductase pyiH reduces the carbonyl at C-21 in preparation for the transfer of an acetyl group by the acetyltransferase pyiB. These 3 reactions whose order is not clear yet, lead to the production of O-methylpyrichalasin J, a deacetylated pyrichalasin H. Finally, pyiB to converts O-methylpyrichalasin J into the final product pyrichalasin H via acetylation of C-21. In Pyricularia grisea (Crabgrass-specific blast fungus), this protein is O-methyltransferase pyiA.